We begin with the raw amino-acid sequence, 2301 residues long: Genome polyprotein (2301 aa).

A zinc finger lies at 3-14 (CKHGYPDVCPIC). The tract at residues 30 to 46 (DGEWFPTDLLCVDLDDD) is acidic. Residues 60-73 (MEWTDLPLVRDIVM) are theilo. Gly-77 is lipidated: N-myristoyl glycine; by host. Cys-501 and Cys-503 form a disulfide bridge. Residues 1039–1045 (YYKQRLI) are host EIF4E binding. In terms of domain architecture, SF3 helicase spans 1281 to 1446 (IPLASLCEKF…CTTSNGMLDI (166 aa)). 1310 to 1317 (GAAGQGKS) lines the ATP pocket. Tyr-1606 carries the post-translational modification O-(5'-phospho-RNA)-tyrosine. Residues 1634–1827 (NPVMDFELFC…AATIITRELI (194 aa)) form the Peptidase C3 domain. Residues His-1678, Asp-1712, and Cys-1791 each act as for protease 3C activity in the active site. The 119-residue stretch at 2069–2187 (NYVYDVDYSN…GTNYQIDFNL (119 aa)) folds into the RdRp catalytic domain. Catalysis depends on for RdRp activity residues Asp-2075 and Asp-2173.

This sequence belongs to the picornaviruses polyprotein family. Interacts with host EIF4E. Interacts with the leader protein. As to quaternary structure, interacts with host RAN; the complex L-RAN recruits cellular kinases responsible for the L-induced nucleocytoplasmic trafficking inhibition. The complex L-RAN can further bind to the host exportins XPO1/CRM1 and CSE1L/CAS. Interacts with the protein 2A. Interacts with host RNASEL; this interaction prevents RNASEL activation by its substrate 2'-5' oligoadenylates. In terms of processing, phosphorylated. Post-translationally, specific enzymatic cleavages by the viral protease in vivo yield a variety of precursors and mature proteins. The polyprotein seems to be cotranslationally cleaved at the 2A/2B junction by a ribosomal skip from one codon to the next without formation of a peptide bond. This process would release the P1-2A peptide from the translational complex. During virion maturation, immature virions are rendered infectious following cleavage of VP0 into VP4 and VP2. This maturation seems to be an autocatalytic event triggered by the presence of RNA in the capsid and is followed by a conformational change of the particle. In terms of processing, uridylylated by the polymerase and is covalently linked to the 5'-end of genomic RNA. This uridylylated form acts as a nucleotide-peptide primer for the polymerase. Post-translationally, myristoylation is required during RNA encapsidation and formation of the mature virus particle.

The protein resides in the virion. The protein localises to the host cytoplasm. It localises to the host nucleus. Its subcellular location is the host nucleolus. It is found in the host cytoplasmic vesicle membrane. The catalysed reaction is RNA(n) + a ribonucleoside 5'-triphosphate = RNA(n+1) + diphosphate. It carries out the reaction ATP + H2O = ADP + phosphate + H(+). It catalyses the reaction Selective cleavage of Gln-|-Gly bond in the poliovirus polyprotein. In other picornavirus reactions Glu may be substituted for Gln, and Ser or Thr for Gly.. Its function is as follows. Forms a complex with host RAN and probably binds to exportins carrying activated MAPK in order to mediate the hyperphosphorylation of host Phe/Gly containing nuclear pore proteins (Nups) resulting in cessation of active nucleocytoplasmic transport. Proteins with NLS signals fail to import, cellular mRNAs fail to export, and some proteins small enough for diffusion are not retained anymore (efflux). The resulting inhibition of cellular protein synthesis serves to ensure maximal viral gene expression and to evade host immune response. The leader protein also inhibits host interferon regulatory factor 3 (IRF3) dimerization, thereby blocking the transcriptional activation of IFN genes. Binds to host RNase L thereby preventing its activation by 2'-5' oligoadenylates in order to counteract the antiviral interferon-inducible OAS/RNase L pathway. In terms of biological role, forms an icosahedral capsid of pseudo T=3 symmetry with capsid proteins VP2 and VP3. Together they form an icosahedral capsid composed of 60 copies of each VP1, VP2, and VP3, with a diameter of approximately 300 Angstroms. VP4 lies on the inner surface of the protein shell formed by VP1, VP2 and VP3. All the three latter proteins contain a beta-sheet structure called beta-barrel jelly roll. VP1 is situated at the 12 fivefold axes, whereas VP2 and VP3 are located at the quasi-sixfold axes. Lies on the inner surface of the capsid shell. After binding to the host receptor, the capsid undergoes conformational changes. Capsid protein VP4 is released, capsid protein VP1 N-terminus is externalized, and together, they shape a pore in the host membrane through which the viral genome is translocated into the host cell cytoplasm. After genome has been released, the channel shrinks. Functionally, VP0 precursor is a component of immature procapsids. Its function is as follows. Involved in host translation shutoff by inhibiting cap-dependent mRNA translation. Nuclear localization is required for this function. The resulting inhibition of cellular protein synthesis serves to ensure maximal viral gene expression and to evade host immune response. Inhibits the phosphorylation of the leader protein. In terms of biological role, affects membrane integrity and causes an increase in membrane permeability. Associates with and induces structural rearrangements of intracellular membranes. It displays RNA-binding, nucleotide binding and NTPase activities. Functionally, serves as membrane anchor via its hydrophobic domain. Its function is as follows. Forms a primer, VPg-pU, which is utilized by the polymerase for the initiation of RNA chains. In terms of biological role, cysteine protease that generates mature viral proteins from the precursor polyprotein. In addition to its proteolytic activity, it binds to viral RNA, and thus influences viral genome replication. RNA and substrate cooperatively bind to the protease. Cleaves host PABP1, this cleavage is important for viral replication. Replicates the genomic and antigenomic RNAs by recognizing replications specific signals. Performs VPg uridylylation. This Theiler's murine encephalomyelitis virus (strain DA) (TMEV) protein is Genome polyprotein.